A 148-amino-acid polypeptide reads, in one-letter code: MDIILMENVDGLGQIGDLVKVKPGYARNFLIPQKFAVEANTRNIKELEHQKRQLEHKAQKVLQASEVVKAQIEKVTCEFALRAGDDGKLFGSVTSMEIQAKLAESGVEVDRKKIQLDEPIKALGEYEVAVKLPAGILATVKVAVTALD.

Belongs to the bacterial ribosomal protein bL9 family.

Binds to the 23S rRNA. The polypeptide is Large ribosomal subunit protein bL9 (Syntrophotalea carbinolica (strain DSM 2380 / NBRC 103641 / GraBd1) (Pelobacter carbinolicus)).